A 279-amino-acid polypeptide reads, in one-letter code: Ribosome maturation factor RimP (279 aa).

The disordered stretch occupies residues 197-279 (LAEEGEPEEQ…GAPALRPTPK (83 aa)). Residues 199–210 (EEGEPEEQEEGG) show a composition bias toward acidic residues.

This sequence belongs to the RimP family.

It is found in the cytoplasm. Required for maturation of 30S ribosomal subunits. This is Ribosome maturation factor RimP from Methylocella silvestris (strain DSM 15510 / CIP 108128 / LMG 27833 / NCIMB 13906 / BL2).